The following is an 85-amino-acid chain: MKPGIHPDYRPVLFHDTAADVYFLIGSTAETTRTHQHTDGNTYPYIALDVSSASHPIYTGKQRKTTTEGRIAGFNKRFAGFATKK.

Belongs to the bacterial ribosomal protein bL31 family. Type B subfamily. Part of the 50S ribosomal subunit.

The polypeptide is Large ribosomal subunit protein bL31B (Stutzerimonas stutzeri (strain A1501) (Pseudomonas stutzeri)).